Reading from the N-terminus, the 168-residue chain is 6,7-dimethyl-8-ribityllumazine synthase (168 aa).

Residues W31, 65–67, and 89–91 contribute to the 5-amino-6-(D-ribitylamino)uracil site; these read SFE and CVV. 94–95 is a (2S)-2-hydroxy-3-oxobutyl phosphate binding site; that stretch reads DT. The active-site Proton donor is H97. Position 122 (Y122) interacts with 5-amino-6-(D-ribitylamino)uracil. Position 136 (R136) interacts with (2S)-2-hydroxy-3-oxobutyl phosphate.

The protein belongs to the DMRL synthase family.

It catalyses the reaction (2S)-2-hydroxy-3-oxobutyl phosphate + 5-amino-6-(D-ribitylamino)uracil = 6,7-dimethyl-8-(1-D-ribityl)lumazine + phosphate + 2 H2O + H(+). It participates in cofactor biosynthesis; riboflavin biosynthesis; riboflavin from 2-hydroxy-3-oxobutyl phosphate and 5-amino-6-(D-ribitylamino)uracil: step 1/2. Functionally, catalyzes the formation of 6,7-dimethyl-8-ribityllumazine by condensation of 5-amino-6-(D-ribitylamino)uracil with 3,4-dihydroxy-2-butanone 4-phosphate. This is the penultimate step in the biosynthesis of riboflavin. The polypeptide is 6,7-dimethyl-8-ribityllumazine synthase (Phocaeicola vulgatus (strain ATCC 8482 / DSM 1447 / JCM 5826 / CCUG 4940 / NBRC 14291 / NCTC 11154) (Bacteroides vulgatus)).